We begin with the raw amino-acid sequence, 415 residues long: Multifunctional CCA protein (415 aa).

Residues Gly8 and Arg11 each contribute to the ATP site. Residues Gly8 and Arg11 each contribute to the CTP site. 2 residues coordinate Mg(2+): Asp21 and Asp23. ATP-binding residues include Arg91, Arg143, and Arg146. Arg91, Arg143, and Arg146 together coordinate CTP. One can recognise an HD domain in the interval Thr232 to Leu333.

The protein belongs to the tRNA nucleotidyltransferase/poly(A) polymerase family. Bacterial CCA-adding enzyme type 1 subfamily. In terms of assembly, monomer. Can also form homodimers and oligomers. Mg(2+) is required as a cofactor. It depends on Ni(2+) as a cofactor.

The catalysed reaction is a tRNA precursor + 2 CTP + ATP = a tRNA with a 3' CCA end + 3 diphosphate. The enzyme catalyses a tRNA with a 3' CCA end + 2 CTP + ATP = a tRNA with a 3' CCACCA end + 3 diphosphate. Its function is as follows. Catalyzes the addition and repair of the essential 3'-terminal CCA sequence in tRNAs without using a nucleic acid template. Adds these three nucleotides in the order of C, C, and A to the tRNA nucleotide-73, using CTP and ATP as substrates and producing inorganic pyrophosphate. tRNA 3'-terminal CCA addition is required both for tRNA processing and repair. Also involved in tRNA surveillance by mediating tandem CCA addition to generate a CCACCA at the 3' terminus of unstable tRNAs. While stable tRNAs receive only 3'-terminal CCA, unstable tRNAs are marked with CCACCA and rapidly degraded. The protein is Multifunctional CCA protein of Cupriavidus taiwanensis (strain DSM 17343 / BCRC 17206 / CCUG 44338 / CIP 107171 / LMG 19424 / R1) (Ralstonia taiwanensis (strain LMG 19424)).